The following is a 478-amino-acid chain: MNALTTIDFNQHVIVRLPSKNYKIVELKPNTSVSLGKFGAFEVNDIIGYPFGLTFEIYYDGEEVSSDENRDSKPKNKIPIGKVRLLSQEIKDVNNDKDDGQSEPPLSIKEKSVSLELSSIDSSATNQNLVNMGSKAQELTVEEIEKMKQESLSSKEIIDKIIKSHKSFHNKTVYSQEKYVNRKKQKFAKYFTVEYLSSSNLLQFLIDKGDIQRVLDMSQESMGMLLNLANIQSEGNYLCMDETGGLLVYFLLERMFGGDNESKSKGKVIVIHENEHANLDLLKFANYSEKFIKEHVHTISLLDFFEPPTLQEIQSRFTPLPKEEARALKGGKKNSYYRKLRWYNTQWQILELTGEFLYDGLVMATTLHLPTLVPKLAEKIHGSRPIVCYGQFKETLLELAHTLYSDLRFLAPSILETRCRPYQSIRGKLHPLMTMKGGGGYLMWCHRVIPAPEPVSENATAADSSEKLAEHGAKKQKI.

The tract at residues 456–478 is disordered; it reads SENATAADSSEKLAEHGAKKQKI. A compositionally biased stretch (basic and acidic residues) spans 464–478; it reads SSEKLAEHGAKKQKI.

It belongs to the TRM6/GCD10 family. In terms of assembly, heterotetramer; composed of two copies of TRM6/GCD10 and two copies of TRM61/GCD14.

The protein localises to the nucleus. Substrate-binding subunit of tRNA (adenine-N(1)-)-methyltransferase, which catalyzes the formation of N(1)-methyladenine at position 58 (m1A58) in initiator methionyl-tRNA. Also required for repression of GCN4 mRNA translation by the upstream open reading frames (uORFs) under conditions of amino acid sufficiency. This is tRNA (adenine(58)-N(1))-methyltransferase non-catalytic subunit TRM6 (GCD10) from Saccharomyces cerevisiae (strain ATCC 204508 / S288c) (Baker's yeast).